The sequence spans 414 residues: MLSFRSLTSTFGFVSRFQIRRLGTSLSIQNLEVQDGRWKGKLATEKKTNREHKSVDTNIKTMKMLKNPKNSTRYLRRSFVPNHRKQENGRDILEDSLSKDHLKVKSCITITTGEGYDLKRCMKLLTMQGLQPTNLIPDEIVSFSYQDNGNKGDVMILGQNGSIVSWGFSESSVRNCIVPIVKAASLNPLNGEDFETEDMDYVEIEGEQDFDKLSSLDNKVTPRIACESFLSGDLIIINSLDSDQGMLDKAAFSSGLSRSTNLAVLEEAMEKHISKTRTITENISKGTKLNLRSSDALKSIGRLFLIRGKLNLYSELIETPDLYWSEPQLEEIFKNVSRYLDIGPRINILNSKLDYSTDECRALISLLNERNSTFLEWIIIYLIAFELCFEIYHFYQKYSSYCSEPTNDDLDATK.

A mitochondrion-targeting transit peptide spans 1 to 29 (MLSFRSLTSTFGFVSRFQIRRLGTSLSIQ). Over 30 to 373 (NLEVQDGRWK…ISLLNERNST (344 aa)) the chain is Mitochondrial matrix. The helical transmembrane segment at 374-394 (FLEWIIIYLIAFELCFEIYHF) threads the bilayer. Residues 395 to 414 (YQKYSSYCSEPTNDDLDATK) are Mitochondrial intermembrane-facing.

The protein belongs to the RMD1/sif2 family. Associates with the mitochondrial ribosome.

The protein resides in the mitochondrion inner membrane. Functionally, component of MIOREX complexes, large expressome-like assemblies of ribosomes with factors involved in all the steps of post-transcriptional gene expression. The polypeptide is MIOREX complex component 10 (Saccharomyces cerevisiae (strain ATCC 204508 / S288c) (Baker's yeast)).